Here is a 212-residue protein sequence, read N- to C-terminus: Tetraspanin-31-A (212 aa).

Residues 1–12 (MVCGGFTCSKNA) lie on the Cytoplasmic side of the membrane. The chain crosses the membrane as a helical span at residues 13–33 (LCALNVVYMLVGLLLIGVAAW). Residues 34–44 (GKGFGIVSSIH) lie on the Extracellular side of the membrane. The chain crosses the membrane as a helical span at residues 45-65 (IIGGVIAIGVFLLLIAIIGLI). Topologically, residues 66 to 72 (GAVSHHQ) are cytoplasmic. Residues 73–93 (VMLFIYMVVLILVFIFQFIVS) traverse the membrane as a helical segment. The Extracellular portion of the chain corresponds to 94-175 (CSCLAMNRSQ…MLNHADEALK (82 aa)). Residues Asn-100, Asn-109, Asn-117, and Asn-134 are each glycosylated (N-linked (GlcNAc...) asparagine). The chain crosses the membrane as a helical span at residues 176–196 (ILGGVGLFFSFTEILGVWLAF). Topologically, residues 197–212 (RFRNQKDPRANPSAFL) are cytoplasmic.

Belongs to the tetraspanin (TM4SF) family.

Its subcellular location is the membrane. This is Tetraspanin-31-A (tspan31-a) from Xenopus laevis (African clawed frog).